We begin with the raw amino-acid sequence, 36 residues long: Toxin Bcg III 29.21 (36 aa).

Residues C6 and C31 are joined by a disulfide bond.

The protein localises to the secreted. It localises to the nematocyst. The protein is Toxin Bcg III 29.21 of Bunodosoma cangicum (Sea anemone).